A 322-amino-acid polypeptide reads, in one-letter code: MSQLYDITIVGGGPVGLFAAFYAHLRQAKVQIIDSLPQLGGQPAILYPEKEILDVPGFPNLTGEELTNRLIEQLNGFDTPIHLNETVLEIDKQEEEFAITTSKGSHLTKTVIIAMGGGAFKPRPLELEGVEDYENIHYHVSNIQQYAGKKVTILGGGDSAVDWALAFEKIAPTTLVHRRDNFRALEHSVQALQESSVTIKTPFAPSQLLGDGKTLDKLEITKVKSDETETIDLDHLFVNYGFKSSVGNLKNWGLDLNRHKIIVNSKQESSQAGIYAIGDCCYYDGKIDLIATGLGEAPTAVNNAINYIDPEQKVQPKHSTSL.

Residues aspartate 34, glutamine 42, tyrosine 47, valine 87, phenylalanine 120, aspartate 279, and threonine 320 each contribute to the FAD site.

Belongs to the ferredoxin--NADP reductase type 2 family. As to quaternary structure, homodimer. FAD is required as a cofactor.

The catalysed reaction is 2 reduced [2Fe-2S]-[ferredoxin] + NADP(+) + H(+) = 2 oxidized [2Fe-2S]-[ferredoxin] + NADPH. The polypeptide is Ferredoxin--NADP reductase (Streptococcus pneumoniae serotype 2 (strain D39 / NCTC 7466)).